Consider the following 525-residue polypeptide: MLIMSSIKELYHAVSINDRFSVVNILEKKNIPIDYINFHPDNPLLEAVKLTNTDMIKTLLDYGICINTRDILGNTALHLIAMDYYVPHNDIKHGHHNDYVFKMVPIINLFLRKKANINACNNLNQTPLHLAAESNNTTLLKILLYNNAKVNILDIYGNTCLHYAVRGRNIESIKLLLSYNVDVNIRNFTYWYSALHEAVQIGDSKISRCIVSLLLCNKANVNTRCRLNTTPIFYAINCIDTLKLLLENGADINATSDNDNAVIHLATENRRYDIIKTLLDYGADVNMIGYRGKTPLYYATENYSYRNMKLLLDHGSNPNIADHIMNTPLFISIKCTCIENTKMLLDSGADINHVNDNGETPISYLAPNLIPTPVAILVISHIVLLKTKYNHIKYLPGFIKNISVIQNFTKFNNIKKVCEDEFRFMRSVSLSANHNLSSYICNDNLHTLVRFIKNPKIYYSINKIRIYRNRLYSIIERLLNRKKLHDLVLELIKDIGVFNKLPLDIISMILDFLSDDDLALMAIFN.

9 ANK repeats span residues 39–71, 72–122, 123–152, 156–185, 190–226, 227–254, 258–287, 291–320, and 324–353; these read HPDNPLLEAVKLTNTDMIKTLLDYGICINTRDI, LGNT…ACNN, LNQTPLHLAAESNNTTLLKILLYNNAKVNI, YGNTCLHYAVRGRNIESIKLLLSYNVDVNI, YWYSALHEAVQIGDSKISRCIVSLLLCNKANVNTRCR, LNTTPIFYAINCIDTLKLLLENGADINA, NDNAVIHLATENRRYDIIKTLLDYGADVNM, RGKTPLYYATENYSYRNMKLLLDHGSNPNI, and IMNTPLFISIKCTCIENTKMLLDSGADINH.

The protein is Putative ankyrin repeat protein FPV228 of Fowlpox virus (strain NVSL) (FPV).